The sequence spans 504 residues: Multidrug efflux pump LfrA (504 aa).

14 helical membrane-spanning segments follow: residues 19–39 (WVALAVLALPVLLIAIDNTVL), 58–78 (LWIVDVYSLVLAALLVAMGSL), 87–107 (LLLIGGAGFAVVSALAAFAPS), 110–130 (LLVGARALLGVFGAMLMPSTL), 145–165 (LAIAIWASCFTAGSALGPIVG), 172–192 (FHWGAVFLVAVPILLPLLVLG), 206–226 (PFDPVSIVLSFTTMLPIVWAV), 233–253 (GLSAAAAAAFAVGIVSGALFV), 275–295 (TSSILANFLSIIGLIGFIFFI), 309–329 (TAGLVTLPGAVVSMIAGLAVV), 338–358 (DTLMVTGLVFVAVGFLMILLF), 361–381 (NLTVAAIIASFVVLELGVGVS), 408–428 (AYELGAVVGTATLGTIFTAFY), and 480–500 (IAPTAVIAAMLVLAAAAVVGV).

The protein belongs to the major facilitator superfamily.

Its subcellular location is the cell inner membrane. Its activity is regulated as follows. Inhibited by the protonophore carbonyl cyanide m-chorophenylhydrazone (CCCP). Ethidium bromide efflux is inhibited by chlorpromazine, thioridazine and verapamil. In terms of biological role, energy-dependent efflux pump that contributes to drug resistance. Catalyzes the efflux of norfloxacin and several related fluoroquinolones (FQ). Contributes significantly to the intrinsic MICs for ethidium bromide and acriflavine. Overexpression confers low-level resistance to hydrophilic FQ such as ciprofloxacin, ofloxacin and levofloxacin, and to ethidium bromide, acridine, acriflavine, rhodamine 123 and some quaternary ammonium compounds. May contribute to resistance to certain beta-lactams. Probably uses the proton motive force to export drugs. This chain is Multidrug efflux pump LfrA, found in Mycolicibacterium smegmatis (strain ATCC 700084 / mc(2)155) (Mycobacterium smegmatis).